The primary structure comprises 377 residues: Spermidine/putrescine import ATP-binding protein PotA (377 aa).

Positions 18 to 248 (IRLSGISKSF…PKNLFVARFI (231 aa)) constitute an ABC transporter domain. Residue 50–57 (GPSGCGKT) coordinates ATP.

This sequence belongs to the ABC transporter superfamily. Spermidine/putrescine importer (TC 3.A.1.11.1) family. As to quaternary structure, the complex is composed of two ATP-binding proteins (PotA), two transmembrane proteins (PotB and PotC) and a solute-binding protein (PotD).

It is found in the cell inner membrane. The enzyme catalyses ATP + H2O + polyamine-[polyamine-binding protein]Side 1 = ADP + phosphate + polyamineSide 2 + [polyamine-binding protein]Side 1.. Its function is as follows. Part of the ABC transporter complex PotABCD involved in spermidine/putrescine import. Responsible for energy coupling to the transport system. The polypeptide is Spermidine/putrescine import ATP-binding protein PotA (Vibrio vulnificus (strain CMCP6)).